The chain runs to 65 residues: uncharacterized protein (65 aa).

The protein resides in the plastid. It is found in the chloroplast. This is an uncharacterized protein from Porphyra purpurea (Red seaweed).